A 168-amino-acid chain; its full sequence is HTH-type transcriptional regulator IscR (168 aa).

Positions 2-131 (KLTSKGRYAV…NNITLGELMS (130 aa)) constitute an HTH rrf2-type domain. The H-T-H motif DNA-binding region spans 28 to 51 (LADISERQGISLSYLEQLFSKLRK). Residues cysteine 92, cysteine 98, and cysteine 104 each coordinate [2Fe-2S] cluster.

The cofactor is [2Fe-2S] cluster.

Regulates the transcription of several operons and genes involved in the biogenesis of Fe-S clusters and Fe-S-containing proteins. This is HTH-type transcriptional regulator IscR from Vibrio vulnificus (strain CMCP6).